The following is a 279-amino-acid chain: Genome polyprotein (279 aa).

This sequence belongs to the potyviridae genome polyprotein family. Post-translationally, genome polyprotein of potyviruses undergoes post-translational proteolytic processing by the main proteinase NIa-pro resulting in the production of at least ten individual proteins. The P1 proteinase and the HC-pro cleave only their respective C-termini autocatalytically. 6K1 is essential for proper proteolytic separation of P3 from CI.

The protein resides in the virion. It catalyses the reaction RNA(n) + a ribonucleoside 5'-triphosphate = RNA(n+1) + diphosphate. Its function is as follows. An RNA-dependent RNA polymerase that plays an essential role in the virus replication. Functionally, involved in aphid transmission, cell-to-cell and systemis movement, encapsidation of the viral RNA and in the regulation of viral RNA amplification. This is Genome polyprotein from Solanum betaceum (Tamarillo).